A 1042-amino-acid polypeptide reads, in one-letter code: Atrial natriuretic peptide-converting enzyme (1042 aa).

The segment at 1–25 (MKQSPALAPEERCRRAGSPKPVLRA) is disordered. Over 1-45 (MKQSPALAPEERCRRAGSPKPVLRADDNNMGNGCSQKLATANLLR) the chain is Cytoplasmic. The DDNN motif signature appears at 26 to 29 (DDNN). The helical; Signal-anchor for type II membrane protein transmembrane segment at 46-66 (FLLLVLIPCICALVLLLVILL) threads the bilayer. Residues 67–1042 (SYVGTLQKVY…QIYIQTFLLN (976 aa)) lie on the Extracellular side of the membrane. Residues Asn80, Asn104, Asn135, and Asn141 are each glycosylated (N-linked (GlcNAc...) asparagine). Positions 134–259 (RNTSACMNIT…SNVSRICFSP (126 aa)) constitute an FZ 1 domain. Intrachain disulfides connect Cys139–Cys199, Cys147–Cys192, Cys183–Cys223, Cys212–Cys256, Cys216–Cys240, Cys269–Cys282, Cys277–Cys295, and Cys289–Cys304. Asn231, Asn245, and Asn251 each carry an N-linked (GlcNAc...) asparagine glycan. LDL-receptor class A domains are found at residues 268–304 (LCGR…EAHC), 305–340 (NCSE…EQNC), 341–377 (DCNP…EVNC), and 378–415 (SCHS…ENCS). A glycan (N-linked (GlcNAc...) asparagine) is linked at Asn305. 9 disulfide bridges follow: Cys306-Cys318, Cys313-Cys331, Cys325-Cys340, Cys342-Cys355, Cys350-Cys368, Cys362-Cys377, Cys379-Cys392, Cys387-Cys405, and Cys399-Cys414. Residue Asn320 is glycosylated (N-linked (GlcNAc...) asparagine). N-linked (GlcNAc...) asparagine glycosylation occurs at Asn376. Asn413, Asn446, Asn451, and Asn469 each carry an N-linked (GlcNAc...) asparagine glycan. The FZ 2 domain occupies 450–573 (NNCSQCEPIT…NSDNQTCLMP (124 aa)). 14 disulfides stabilise this stretch: Cys455/Cys518, Cys463/Cys511, Cys502/Cys540, Cys529/Cys570, Cys533/Cys557, Cys580/Cys592, Cys587/Cys605, Cys599/Cys614, Cys616/Cys630, Cys624/Cys643, Cys637/Cys652, Cys655/Cys667, Cys662/Cys680, and Cys674/Cys689. N-linked (GlcNAc...) asparagine glycosylation occurs at Asn567. 3 LDL-receptor class A domains span residues 579–614 (ECSP…EENC), 615–653 (GCKE…KNCS), and 654–689 (FCQD…EWDC). N-linked (GlcNAc...) asparagine glycosylation occurs at Asn651. The SRCR domain occupies 690 to 801 (VTLSINVNSS…RRPAARMNKR (112 aa)). Asn697 and Asn761 each carry an N-linked (GlcNAc...) asparagine glycan. 5 cysteine pairs are disulfide-bonded: Cys790–Cys912, Cys828–Cys844, Cys926–Cys991, Cys955–Cys970, and Cys981–Cys1010. One can recognise a Peptidase S1 domain in the interval 802-1035 (ILGGRTSRPG…FVEWIKRQIY (234 aa)). Catalysis depends on charge relay system residues His843 and Asp892. Residue Ser985 is the Charge relay system of the active site. Asn1022 carries an N-linked (GlcNAc...) asparagine glycan.

This sequence belongs to the peptidase S1 family. N-glycosylated; required for processing and activation. Post-translationally, activated through proteolytic processing by a trypsin-like protease; cleaved into a N-terminal propeptide and an activated corin protease fragment. Different soluble forms are produced by cleavage and autocatalytic cleavage: Atrial natriuretic peptide-converting enzyme, 180 kDa soluble fragment is produced by cleavage by ADAM10, while 160 kDa and 100 kDa soluble fragments are produced by autocatalytic cleavage. Cleavage by ADAM10 to produce soluble 180 kDa soluble fragment takes place after the transmembrane region and before FZ 1. In terms of processing, a disulfide bond links the activated corin protease fragment and the N-terminal propeptide. The disulfide bond also links the activated corin protease fragment with soluble fragments (100 kDa, 160 kDa and 180 kDa fragments). Highly expressed in heart. Expressed in heart myocytes. Also expressed in pregnant uterus. Detected in blood, in plasma as well as in serum (at protein level).

It localises to the cell membrane. Its subcellular location is the secreted. Its activity is regulated as follows. Inhibited in a dose-dependent manner by non-specific trypsin-like serine protease inhibitors including benzamidine. Serine-type endopeptidase involved in atrial natriuretic peptide (NPPA) and brain natriuretic peptide (NPPB) processing. Converts through proteolytic cleavage the non-functional propeptides NPPA and NPPB into their active hormones, ANP and BNP(1-32) respectively, thereby regulating blood pressure in the heart and promoting natriuresis, diuresis and vasodilation. Proteolytic cleavage of pro-NPPA also plays a role in female pregnancy by promoting trophoblast invasion and spiral artery remodeling in uterus. Also acts as a regulator of sodium reabsorption in kidney. Functionally, has weaker endopeptidase activity compared to isoform 1. The sequence is that of Atrial natriuretic peptide-converting enzyme (CORIN) from Homo sapiens (Human).